Consider the following 660-residue polypeptide: Kinesin-like protein KIF22 (660 aa).

The disordered stretch occupies residues 1–31 (MSLRAKTCPQRREMASATSGPGRCVSKGGLG). The Kinesin motor domain maps to 38 to 363 (RVRVAVRLRP…LNFTARSKEV (326 aa)). 122–129 (GPTGAGKT) lines the ATP pocket. Residues 391–418 (PSEAKKAKGPEEESTGSPESTAAPASAS) are disordered. Positions 405–418 (TGSPESTAAPASAS) are enriched in low complexity. Ser407, Ser422, and Ser447 each carry phosphoserine. A Glycyl lysine isopeptide (Lys-Gly) (interchain with G-Cter in SUMO2) cross-link involves residue Lys460. Residues 460-505 (KRERMVLMKTVEEKNLEIERLKMKQKELEAKVLAQEAPDPREKENT) adopt a coiled-coil conformation. Disordered regions lie at residues 493 to 516 (AQEAPDPREKENTPTILQPPASYS) and 534 to 567 (IQKQRESSNQIQLLKKGPKRKLEPSPESEAVEKD). Over residues 505–516 (TPTILQPPASYS) the composition is skewed to polar residues. Phosphoserine occurs at positions 540 and 576.

This sequence belongs to the TRAFAC class myosin-kinesin ATPase superfamily. Kinesin family. As to quaternary structure, interacts with FAM83D and SIAH1. In terms of processing, ubiquitinated; mediated by SIAH1 and leading to its subsequent proteasomal degradation.

It is found in the nucleus. Its subcellular location is the cytoplasm. The protein resides in the cytoskeleton. Functionally, kinesin family member that is involved in spindle formation and the movements of chromosomes during mitosis and meiosis. Binds to microtubules and to DNA. Plays a role in congression of laterally attached chromosomes in NDC80-depleted cells. This is Kinesin-like protein KIF22 (Kif22) from Mus musculus (Mouse).